Reading from the N-terminus, the 71-residue chain is Large ribosomal subunit protein uL29 (71 aa).

Belongs to the universal ribosomal protein uL29 family.

This chain is Large ribosomal subunit protein uL29 (rpl29), found in Halobacterium salinarum (strain ATCC 700922 / JCM 11081 / NRC-1) (Halobacterium halobium).